A 320-amino-acid chain; its full sequence is 1,5-anhydro-D-fructose reductase (320 aa).

Y40 acts as the Proton donor in catalysis. H102 is a substrate binding site. NADP(+) contacts are provided by residues Q194 and 265 to 277; that span reads IPGSITPSHIKEN.

Belongs to the aldo/keto reductase family. Monomer.

It is found in the cytoplasm. It catalyses the reaction 1,5-anhydro-D-glucitol + NADP(+) = 1,5-anhydro-D-fructose + NADPH + H(+). Inhibited by p-chloromercuribenzoic acid and alkyliodines. Functionally, catalyzes the NADPH-dependent reduction of 1,5-anhydro-D-fructose (AF) to 1,5-anhydro-D-glucitol. The protein is 1,5-anhydro-D-fructose reductase (AKR1E2) of Macaca fascicularis (Crab-eating macaque).